Consider the following 121-residue polypeptide: Protein ripply2.1 (121 aa).

Residues methionine 1 to histidine 69 form a disordered region. Positions tryptophan 29–tryptophan 32 match the WRPW motif motif. Residues histidine 39–histidine 57 show a composition bias toward polar residues. Positions histidine 69 to tyrosine 104 are ripply homology domain.

Belongs to the ripply family. As to expression, expressed in the presomitic mesoderm (PSM) in the anterior halves of somitomeres S-0, S-I and S-II and in the newly formed somites.

Its subcellular location is the nucleus. Functionally, required during somitogenesis to regulate somite differentiation and the positioning of the presomitic mesoderm-front. Represses the expression of genes involved in somite segmentation by acting with the corepressor tle4 to down-regulate the transcriptional activity of tbx6. Also regulates retinoic acid signaling during somitogenesis and is necessary for the expression of aldh1a2/raldh2. The chain is Protein ripply2.1 (ripply2.1) from Xenopus laevis (African clawed frog).